A 130-amino-acid chain; its full sequence is Small ribosomal subunit protein uS8 (130 aa).

The protein belongs to the universal ribosomal protein uS8 family. Part of the 30S ribosomal subunit. Contacts proteins S5 and S12.

Its function is as follows. One of the primary rRNA binding proteins, it binds directly to 16S rRNA central domain where it helps coordinate assembly of the platform of the 30S subunit. This is Small ribosomal subunit protein uS8 from Cytophaga hutchinsonii (strain ATCC 33406 / DSM 1761 / CIP 103989 / NBRC 15051 / NCIMB 9469 / D465).